Consider the following 606-residue polypeptide: Homeobox protein B-H1 (606 aa).

Positions 1-14 (MKDSMSILTQTPSE) are enriched in polar residues. 4 disordered regions span residues 1-65 (MKDS…PAVA), 104-188 (YKQQ…HPHA), 261-340 (APAG…AFTD), and 508-606 (AAAN…QIQV). Basic residues predominate over residues 21-40 (QLHHHLSHHHHPALHHHPVL). Positions 41–65 (QHHYSLQQQHQQQQQQQPPAPPAVA) are enriched in low complexity. A compositionally biased stretch (basic residues) spans 108–118 (QQHHHHHHQSH). Positions 119 to 138 (HNNNNHSGGSSGGTSPTHHN) are enriched in low complexity. The span at 166-188 (HHLHPQSHPHPHPHPHSHPHPHA) shows a compositional bias: basic residues. Over residues 266-284 (ELDDSSDYHEENEDCDSDE) the composition is skewed to acidic residues. Positions 286 to 295 (GSAGGGGGGS) are enriched in gly residues. Residues 297-314 (HMDDHSVCSNGGKDDDGN) are compositionally biased toward basic and acidic residues. Over residues 315 to 325 (SIKSGSTSDMS) the composition is skewed to polar residues. Residues 331-390 (QRKARTAFTDHQLQTLEKSFERQKYLSVQERQELAHKLDLSDCQVKTWYQNRRTKWMRQT) constitute a DNA-binding region (homeobox). Pro residues predominate over residues 513–522 (GGPPPPPPPS). Residues 523–534 (SAAAATGGSPSP) are compositionally biased toward low complexity. The segment covering 561-576 (ASPPLPLPLARPPSTP) has biased composition (pro residues).

This sequence belongs to the Antp homeobox family. Abundant in the eye-antenna imaginal disk.

The protein localises to the nucleus. Functionally required in R1 and R6 receptor cells and primary pigment cells for normal eye development. This is Homeobox protein B-H1 (B-H1) from Drosophila ananassae (Fruit fly).